Here is a 678-residue protein sequence, read N- to C-terminus: SPS-sensor component PTR3 (678 aa).

2 disordered regions span residues Thr-111–Thr-158 and Ala-179–Leu-211. Residues Thr-127–Thr-144 are compositionally biased toward low complexity. Residues Ala-149–Thr-158 show a composition bias toward basic and acidic residues. The segment covering Ala-179–Thr-194 has biased composition (polar residues).

In terms of assembly, homodimer. Component of the plasma membrane SPS (SSY1-PTR3-SSY5) amino acid sensor complex. Interacts directly with SSY1 and SSY5. Post-translationally, hyperphosphorylated in response to extracellular amino acids and dependent on the amino acid sensor component SSY1. Phosphorylation is positively regulated by casein kinases YCK1 and YCK2, and negatively regulated by phosphatase PP2A regulatory subunit RTS1.

It is found in the cell membrane. Component of the SPS-sensor system, which regulates the expression of several amino acid-metabolizing enzymes and amino acid- and peptide-permeases in response to extracellular amino acid levels by controlling the activity of two transcription factors, STP1 and STP2. In Saccharomyces cerevisiae (strain ATCC 204508 / S288c) (Baker's yeast), this protein is SPS-sensor component PTR3 (PTR3).